The chain runs to 1712 residues: Latent-transforming growth factor beta-binding protein 1 (1712 aa).

Positions 1-20 are cleaved as a signal peptide; that stretch reads MAGAWLRWGLLLWAGLLAWS. Residues 63–148 are disordered; sequence SSTATSSRSL…QDTQSSGGSR (86 aa). Over residues 136–147 the composition is skewed to polar residues; the sequence is KVQQDTQSSGGS. The region spanning 181–213 is the EGF-like 1 domain; the sequence is TKPSCVPPCQNGGMCLRPQFCVCKPGTKGKACE. Disulfide bonds link Cys-185-Cys-195, Cys-189-Cys-201, and Cys-203-Cys-212. N-linked (GlcNAc...) asparagine glycans are attached at residues Asn-339 and Asn-370. Residues 391–423 form the EGF-like 2 domain; it reads RVVICHLPCMNGGQCSSRDKCQCPPNFTGKLCQ. Disulfide bonds link Cys-395–Cys-405, Cys-399–Cys-411, Cys-413–Cys-422, Cys-551–Cys-573, Cys-560–Cys-586, and Cys-574–Cys-589. N-linked (GlcNAc...) asparagine glycosylation is present at Asn-416. The 53-residue stretch at 549-601 folds into the TB 1 domain; the sequence is GRCFQETIGSQCGKALPGLSKQEDCCGTVGTSWGFNKCQKCPKKQSYHGYTQM. An N-linked (GlcNAc...) asparagine glycan is attached at Asn-612. One can recognise an EGF-like 3; calcium-binding domain in the interval 618–658; sequence DINECQLQGVCPNGECLNTMGSYRCSCKMGFGPDPTFSSCV. Cystine bridges form between Cys-622/Cys-633, Cys-628/Cys-642, Cys-644/Cys-657, Cys-671/Cys-694, Cys-681/Cys-706, Cys-695/Cys-709, and Cys-696/Cys-721. O-linked (Glc) serine glycosylation is present at Ser-639. Positions 669–721 constitute a TB 2 domain; that stretch reads GPCYRLVSPGRQCMHPLSVHLTKQICCCSVGKAWGPQCEKCPLPGTAAFKEIC. The tract at residues 752-803 is disordered; sequence KNTQPVAKSTHPPPLPAKEEPVEALTSSREHGPGVAEPEVVTAPPEKEIPSL. 2 O-linked (GalNAc...) threonine glycosylation sites follow: Thr-761 and Thr-793. An EGF-like 4; calcium-binding domain is found at 865 to 906; sequence EINECTVNPDICGAGHCINLPVRYTCICYEGYKFSEQQRKCI. 37 disulfide bridges follow: Cys-869-Cys-881, Cys-876-Cys-890, Cys-892-Cys-905, Cys-911-Cys-923, Cys-918-Cys-932, Cys-934-Cys-947, Cys-953-Cys-964, Cys-959-Cys-973, Cys-976-Cys-988, Cys-994-Cys-1005, Cys-1000-Cys-1014, Cys-1017-Cys-1028, Cys-1034-Cys-1045, Cys-1040-Cys-1054, Cys-1056-Cys-1069, Cys-1075-Cys-1086, Cys-1081-Cys-1095, Cys-1097-Cys-1110, Cys-1116-Cys-1127, Cys-1122-Cys-1136, Cys-1138-Cys-1151, Cys-1157-Cys-1169, Cys-1164-Cys-1178, Cys-1180-Cys-1192, Cys-1198-Cys-1210, Cys-1204-Cys-1219, Cys-1221-Cys-1234, Cys-1240-Cys-1252, Cys-1246-Cys-1261, Cys-1263-Cys-1276, Cys-1282-Cys-1294, Cys-1289-Cys-1303, Cys-1305-Cys-1319, Cys-1340-Cys-1363, Cys-1350-Cys-1375, Cys-1364-Cys-1380, and Cys-1365-Cys-1392. The EGF-like 5; calcium-binding domain maps to 907–948; sequence DIDECAQAQHLCSQGRCENTEGSFLCICPAGFIASEEGSNCI. A glycan (O-linked (Glc) serine) is linked at Ser-929. In terms of domain architecture, EGF-like 6; calcium-binding spans 949 to 989; sequence DVDECLRPDVCRDGRCINTAGAFRCEYCDSGYRMSRRGHCE. Asn-966 carries the (3R)-3-hydroxyasparagine modification. Residues 990 to 1029 enclose the EGF-like 7; calcium-binding domain; it reads DIDECLTPSTCPEEQCVNSPGSYQCVPCTEGFRGWNGQCL. O-linked (Glc) serine glycosylation occurs at Ser-1011. An EGF-like 8; calcium-binding domain is found at 1030–1070; that stretch reads DVDECLQPKVCTNGSCTNLEGSYMCSCHKGYSPTPDHRHCQ. An N-linked (GlcNAc...) asparagine glycan is attached at Asn-1042. Ser-1051 is a glycosylation site (O-linked (Glc) serine). Positions 1071 to 1111 constitute an EGF-like 9; calcium-binding domain; sequence DIDECQQGNLCMNGQCKNTDGSFRCTCGQGYQLSAAKDQCE. In terms of domain architecture, EGF-like 10; calcium-binding spans 1112 to 1152; sequence DIDECEHRHLCSHGQCRNTEGSFQCLCNQGYRASVLGDHCE. (3R)-3-hydroxyasparagine is present on Asn-1129. An O-linked (Glc) serine glycan is attached at Ser-1133. An EGF-like 11; calcium-binding domain is found at 1153–1193; it reads DINECLEDSSVCQGGDCINTAGSYDCTCPDGLQLNDNKGCQ. Residues 1194–1235 form the EGF-like 12; calcium-binding domain; sequence DINECAQPGLCAPHGECLNTQGSFHCVCEQGFSISADGRTCE. The O-linked (Glc) serine glycan is linked to Ser-1216. The EGF-like 13; calcium-binding domain maps to 1236–1277; the sequence is DIDECVNNTVCDSHGFCDNTAGSFRCLCYQGFQAPQDGQGCV. Asn-1242 carries N-linked (GlcNAc...) asparagine glycosylation. In terms of domain architecture, EGF-like 14; calcium-binding spans 1278–1320; that stretch reads DVNECELLSGVCGEAFCENVEGSFLCVCADENQEYSPMTGQCR. The segment at 1335 to 1402 is 8-Cys3 region; that stretch reads EEKKECYYNL…PRGKGFVPAG (68 aa). The TB 3 domain maps to 1338-1392; that stretch reads KECYYNLNDASLCDNVLAPNVTKQECCCTSGAGWGDNCEIFPCPVQGTAEFSEMC. An N-linked (GlcNAc...) asparagine glycan is attached at Asn-1357. The residue at position 1405 (Ser-1405) is a Phosphoserine. The EGF-like 15; calcium-binding domain maps to 1415–1457; sequence DADECLLFGEEICKNGYCLNTQPGYECYCKEGTYYDPVKLQCF. Intrachain disulfides connect Cys-1419–Cys-1432, Cys-1427–Cys-1441, Cys-1443–Cys-1456, Cys-1462–Cys-1473, Cys-1468–Cys-1482, Cys-1484–Cys-1497, Cys-1517–Cys-1541, Cys-1527–Cys-1553, Cys-1542–Cys-1556, and Cys-1543–Cys-1568. Residues 1458–1498 enclose the EGF-like 16; calcium-binding domain; the sequence is DMDECQDPNSCIDGQCVNTEGSYNCFCTHPMVLDASEKRCV. The O-linked (Glc) serine glycan is linked to Ser-1479. Residues 1498–1712 form a C-terminal domain region; it reads VQPTESNEQI…LNLDKDSDLE (215 aa). Residues 1515–1568 enclose the TB 4 domain; the sequence is DLCWEHLSEEYVCSRPLVGKQTTYTECCCLYGEAWGMQCALCPMKDSDDYAQLC. Ser-1588 and Ser-1607 each carry phosphoserine. An EGF-like 17 domain is found at 1612 to 1652; the sequence is QAEECGILNGCENGRCVRVQEGYTCDCFDGYHLDMAKMTCV. 6 cysteine pairs are disulfide-bonded: Cys-1616/Cys-1627, Cys-1622/Cys-1636, Cys-1638/Cys-1651, Cys-1657/Cys-1672, Cys-1667/Cys-1681, and Cys-1683/Cys-1696. One can recognise an EGF-like 18; calcium-binding domain in the interval 1653–1697; that stretch reads DVNECSELNNRMSLCKNAKCINTEGSYKCVCLPGYVPSDKPNYCT. A glycan (O-linked (Glc) serine) is linked at Ser-1678.

Belongs to the LTBP family. As to quaternary structure, interacts with TGFB1; associates via disulfide bonds with the Latency-associated peptide chain (LAP) regulatory chain of TGFB1, leading to regulate activation of TGF-beta-1. LTBP1 does not bind directly to TGF-beta-1, the active chain of TGFB1. Interacts (via C-terminal domain) with FBN1 (via N-terminal domain). Interacts with FBN2. Interacts with ADAMTSL2. Interacts with EFEMP2. In terms of processing, contains hydroxylated asparagine residues. Two intrachain disulfide bonds from the TB3 domain are rearranged upon TGFB1 binding, and form interchain bonds with TGFB1 propeptide, anchoring it to the extracellular matrix. Post-translationally, O-glycosylated on serine residues by POGLUT2 and POGLUT3.

It is found in the secreted. It localises to the extracellular space. The protein resides in the extracellular matrix. Functionally, key regulator of transforming growth factor beta (TGFB1, TGFB2 and TGFB3) that controls TGF-beta activation by maintaining it in a latent state during storage in extracellular space. Associates specifically via disulfide bonds with the Latency-associated peptide (LAP), which is the regulatory chain of TGF-beta, and regulates integrin-dependent activation of TGF-beta. Outcompeted by LRRC32/GARP for binding to LAP regulatory chain of TGF-beta. This Rattus norvegicus (Rat) protein is Latent-transforming growth factor beta-binding protein 1 (Ltbp1).